Consider the following 313-residue polypeptide: Putative serine protease 29 (313 aa).

Residues methionine 1–threonine 22 show a composition bias toward pro residues. The disordered stretch occupies residues methionine 1–proline 27. Residues isoleucine 68–glycine 310 enclose the Peptidase S1 domain. Cysteine 99 and cysteine 115 are oxidised to a cystine. The Charge relay system role is filled by histidine 114. An N-linked (GlcNAc...) asparagine glycan is attached at asparagine 143. Catalysis depends on aspartate 161, which acts as the Charge relay system. 3 disulfide bridges follow: cysteine 193-cysteine 268, cysteine 226-cysteine 249, and cysteine 258-cysteine 286. Residue serine 262 is the Charge relay system of the active site.

It belongs to the peptidase S1 family.

The protein resides in the secreted. This Homo sapiens (Human) protein is Putative serine protease 29 (PRSS29P).